A 354-amino-acid chain; its full sequence is Ornithine carbamoyltransferase, catabolic (354 aa).

Residues 67-70, Gln94, Arg118, and 145-148 contribute to the carbamoyl phosphate site; these read STRT and HPTQ. L-ornithine is bound by residues Asn177, Asp241, and 245–246; that span reads SM. Residues 284 to 285 and Arg329 each bind carbamoyl phosphate; that span reads CL.

This sequence belongs to the aspartate/ornithine carbamoyltransferase superfamily. OTCase family.

Its subcellular location is the cytoplasm. The enzyme catalyses carbamoyl phosphate + L-ornithine = L-citrulline + phosphate + H(+). Its pathway is amino-acid degradation; L-arginine degradation via ADI pathway; carbamoyl phosphate from L-arginine: step 2/2. In terms of biological role, reversibly catalyzes the transfer of the carbamoyl group from carbamoyl phosphate (CP) to the N(epsilon) atom of ornithine (ORN) to produce L-citrulline. The polypeptide is Ornithine carbamoyltransferase, catabolic (arcB) (Lactococcus lactis subsp. lactis (strain IL1403) (Streptococcus lactis)).